Here is a 109-residue protein sequence, read N- to C-terminus: Large ribosomal subunit protein uL22 (109 aa).

The protein belongs to the universal ribosomal protein uL22 family. In terms of assembly, part of the 50S ribosomal subunit.

In terms of biological role, this protein binds specifically to 23S rRNA; its binding is stimulated by other ribosomal proteins, e.g. L4, L17, and L20. It is important during the early stages of 50S assembly. It makes multiple contacts with different domains of the 23S rRNA in the assembled 50S subunit and ribosome. The globular domain of the protein is located near the polypeptide exit tunnel on the outside of the subunit, while an extended beta-hairpin is found that lines the wall of the exit tunnel in the center of the 70S ribosome. In Neisseria gonorrhoeae (strain ATCC 700825 / FA 1090), this protein is Large ribosomal subunit protein uL22.